We begin with the raw amino-acid sequence, 406 residues long: MDGSHSAALKLQQLPPTSSSSAVSEASFSYKENLIGALLAIFGHLVVSIALNLQKYCHIRLAGSKDPRAYFKTKTWWLGLFLMLLGELGVFASYAFAPLSLIVPLSAVSVIASAIIGIIFIKEKWKPKDFLRRYVLSFVGCGLAVVGTYLLVTFAPNSHEKMTGENVTRHLVSWPFLLYMLVEIILFCLLLYFYKEKNANNIVVILLLVALLGSMTVVTVKAVAGMLVLSIQGNLQLDYPIFYVMFVCMVATAVYQAAFLSQASQMYDSSLIASVGYILSTTIAITAGAIFYLDFIGEDVLHICMFALGCLIAFLGVFLITRNRKKPIPFEPYISMDAMPGMQNMHDKGMTVQPELKASFSYGALENNDNISEIYAPATLPVMQEEHGSRSASGVPYRVLEHTKKE.

Helical transmembrane passes span 33–53 (NLIG…ALNL), 76–96 (WWLG…SYAF), 101–121 (LIVP…IIFI), and 135–155 (VLSF…VTFA). Asn-166 carries N-linked (GlcNAc...) asparagine glycosylation. Transmembrane regions (helical) follow at residues 171 to 191 (LVSW…CLLL), 202 to 222 (IVVI…TVKA), 240 to 260 (PIFY…AAFL), 271 to 291 (LIAS…GAIF), and 300 to 320 (VLHI…VFLI). Position 372 is a phosphoserine (Ser-372).

The protein belongs to the NIPA family.

It is found in the membrane. This chain is NIPA-like protein 3 (NIPAL3), found in Homo sapiens (Human).